We begin with the raw amino-acid sequence, 743 residues long: Catalase-peroxidase (743 aa).

Residues 1-15 (MSSDSRPPQPDTSTQ) show a composition bias toward polar residues. Residues 1–40 (MSSDSRPPQPDTSTQSNSESESPAISSPTPQDHAPMTNRD) are disordered. Residues 16–28 (SNSESESPAISSP) show a composition bias toward low complexity. A cross-link (tryptophyl-tyrosyl-methioninium (Trp-Tyr) (with M-259)) is located at residues 110-233 (WHAAGTYRIQ…YGATTMGLIY (124 aa)). The Proton acceptor role is filled by histidine 111. Positions 233 to 259 (YVNPEGPEGKPDPVAAAHDIRETFARM) form a cross-link, tryptophyl-tyrosyl-methioninium (Tyr-Met) (with W-110). Histidine 274 serves as a coordination point for heme b. The interval 490–511 (DKRGGANGGRLRLEPQKSWESN) is disordered.

This sequence belongs to the peroxidase family. Peroxidase/catalase subfamily. As to quaternary structure, homodimer or homotetramer. Requires heme b as cofactor. Formation of the three residue Trp-Tyr-Met cross-link is important for the catalase, but not the peroxidase activity of the enzyme.

The catalysed reaction is H2O2 + AH2 = A + 2 H2O. It catalyses the reaction 2 H2O2 = O2 + 2 H2O. Functionally, bifunctional enzyme with both catalase and broad-spectrum peroxidase activity. In Mycobacterium ulcerans (strain Agy99), this protein is Catalase-peroxidase.